The chain runs to 155 residues: Fibroblast growth factor 1 (155 aa).

N-acetylalanine is present on Ala2. The propeptide occupies 2–15; sequence AEGEITTFTALTEK. A Nuclear localization signal motif is present at residues 24–27; it reads KKPK. Residue Asn33 participates in heparin binding. Residues 127-143 are heparin-binding; the sequence is KKNGSCKRGPRTHYGQK.

This sequence belongs to the heparin-binding growth factors family. In terms of assembly, monomer. Homodimer. Interacts with FGFR1, FGFR2, FGFR3 and FGFR4. Affinity between fibroblast growth factors (FGFs) and their receptors is increased by heparan sulfate glycosaminoglycans that function as coreceptors. Found in a complex with FGFBP1, FGF1 and FGF2. Interacts with FGFBP1. Part of a Cu(2+)-dependent multiprotein aggregate containing FGF1, S100A13 and SYT1. Interacts with SYT1. Interacts with S100A13. Interacts with LRRC59. Interacts with CSNKA, CSNKB and FIBP. While binding with LRRC59, CSNKA and FIBP seem mutually exclusive, CSNKB and FIBP may cooperatively interact with FGF1. Forms a ternary complex with FGFR1 and ITGAV:ITGB3 and induces the recruitment of PTPN11 to the complex. Post-translationally, in the nucleus, phosphorylated by PKC/PRKCD. Predominantly expressed in kidney and brain. Detected at much lower levels in heart and skeletal muscle.

Its subcellular location is the secreted. It localises to the cytoplasm. It is found in the cell cortex. The protein resides in the cytosol. The protein localises to the nucleus. Plays an important role in the regulation of cell survival, cell division, angiogenesis, cell differentiation and cell migration. Functions as a potent mitogen in vitro. Acts as a ligand for FGFR1 and integrins. Binds to FGFR1 in the presence of heparin leading to FGFR1 dimerization and activation via sequential autophosphorylation on tyrosine residues which act as docking sites for interacting proteins, leading to the activation of several signaling cascades. Binds to integrin ITGAV:ITGB3. Its binding to integrin, subsequent ternary complex formation with integrin and FGFR1, and the recruitment of PTPN11 to the complex are essential for FGF1 signaling. Induces the phosphorylation and activation of FGFR1, FRS2, MAPK3/ERK1, MAPK1/ERK2 and AKT1. Can induce angiogenesis. This is Fibroblast growth factor 1 (FGF1) from Homo sapiens (Human).